We begin with the raw amino-acid sequence, 120 residues long: MSDEIIVVSTPYLPGHKITKTLGFTWGLIVRSRGLGRNITAGLRSLAGGEIHEYTQLLNQSRQEALDRLKEHAATMGANAVIGVSFDSSETGGVMTEVLAYGTAVVVEPETGAASPVRLG.

This sequence belongs to the UPF0145 family.

This chain is UPF0145 protein Mboo_1021, found in Methanoregula boonei (strain DSM 21154 / JCM 14090 / 6A8).